Reading from the N-terminus, the 352-residue chain is Ion-translocating oxidoreductase complex subunit D (352 aa).

Transmembrane regions (helical) follow at residues Ile-20–Gly-40, Gly-42–Leu-62, Ala-78–Ala-109, Pro-123–Leu-143, and Ile-148–Ala-168. Thr-187 is modified (FMN phosphoryl threonine). Transmembrane regions (helical) follow at residues Ile-214–Leu-234, Trp-242–Phe-262, Leu-267–Leu-287, and Leu-301–Gly-318.

This sequence belongs to the NqrB/RnfD family. The complex is composed of six subunits: RsxA, RsxB, RsxC, RsxD, RsxE and RsxG. Requires FMN as cofactor.

The protein localises to the cell inner membrane. Functionally, part of a membrane-bound complex that couples electron transfer with translocation of ions across the membrane. Required to maintain the reduced state of SoxR. The polypeptide is Ion-translocating oxidoreductase complex subunit D (Shigella flexneri serotype 5b (strain 8401)).